A 489-amino-acid polypeptide reads, in one-letter code: Inositol-pentakisphosphate 2-kinase (489 aa).

The short motif at 136 to 140 is the EXKPK motif element; that stretch reads EIKPK.

This sequence belongs to the IPK1 type 2 family.

It localises to the cytoplasm. It is found in the nucleus. It catalyses the reaction 1D-myo-inositol 1,3,4,5,6-pentakisphosphate + ATP = 1D-myo-inositol hexakisphosphate + ADP + H(+). In terms of biological role, phosphorylates Ins(1,3,4,5,6)P5 at position 2 to form Ins(1,2,3,4,5,6)P6 (InsP6 or phytate). InsP6 is involved in many processes such as mRNA export, non-homologous end-joining, endocytosis, ion channel regulation. It also protects cells from TNF-alpha-induced apoptosis. The polypeptide is Inositol-pentakisphosphate 2-kinase (Ippk) (Rattus norvegicus (Rat)).